We begin with the raw amino-acid sequence, 400 residues long: Probable vacuolar protease A (400 aa).

Residues 1–18 (MKGSLLLAGATLLGCTSA) form the signal peptide. Positions 19–72 (KLHSLKLKKVSLKEQLEHADIDVQIKSLGQKYMGIRPEQHEQQMFKEQTPIEAE) are cleaved as a propeptide — activation peptide. The Peptidase A1 domain maps to 87–397 (YFSEISIGTP…DLGKGTVGLA (311 aa)). The active site involves Asp105. A disulfide bridge connects residues Cys118 and Cys123. Residue Asn140 is glycosylated (N-linked (GlcNAc...) asparagine). Asp289 is a catalytic residue. A disulfide bridge links Cys323 with Cys356. A glycan (N-linked (GlcNAc...) asparagine) is linked at Asn340.

Belongs to the peptidase A1 family.

The protein localises to the vacuole lumen. It localises to the secreted. The enzyme catalyses Hydrolysis of proteins with broad specificity for peptide bonds. Cleaves -Leu-Leu-|-Val-Tyr- bond in a synthetic substrate. Does not act on esters of Tyr or Arg.. Vacuolar aspartic endopeptidase which is probably also secreted and contributes to virulence. This is Probable vacuolar protease A (PEP2) from Trichophyton verrucosum (strain HKI 0517).